The primary structure comprises 746 residues: Dystrobrevin alpha (746 aa).

The interaction with MAGEE1 stretch occupies residues 1–288; sequence MIEDSGKRGN…SHSNQHQMKE (288 aa). The ZZ-type zinc-finger motif lies at 238–294; sequence FHPVECSYCHSESMMGFRYRCQQCHNYQLCQDCFWRGHAGGSHSNQHQMKEYTSWKS. Zn(2+)-binding residues include cysteine 243, cysteine 246, cysteine 258, cysteine 261, cysteine 267, cysteine 270, histidine 280, and histidine 284. A syntrophin-binding region region spans residues 397 to 447; sequence DRLADEHVLIGLYVNMLRNDPPCMLESSNRLDEEHRLIARYAARLAAESSS. Residues 458–557 adopt a coiled-coil conformation; the sequence is DISFTIDANK…KLLKEEELKQ (100 aa). Disordered regions lie at residues 555-577, 646-667, and 684-721; these read LKQG…SRPI, ETES…APSP, and YIHG…VRQL. Positions 563–576 are enriched in low complexity; that stretch reads SSPRSSPSHTISRP. Position 666 is a phosphoserine (serine 666).

Belongs to the dystrophin family. Dystrobrevin subfamily. Interacts with dystrophin, utrophin and the syntrophins SNTA1, SNTB1, SNTB2, SNTG1 and SNTG2. Binds dystrobrevin binding protein 1. Interacts with MAGEE1. Interacts with Ctnnal1. The interaction is required for correct localization of both Ctnnal1 and Dtna. In terms of assembly, does not interact with utrophin. As to quaternary structure, does not interact with syntrophin. Phosphorylation of isoform 2 on tyrosine kinase substrate domain present in the C-terminus. Expressed in skeletal muscle, heart, lung and brain. Sarcolemma and neuromuscular junction in skeletal muscle. Isoform 2 is restricted to the neuromuscular junction. Isoforms 5 and 6 are only expressed in muscle.

The protein localises to the cytoplasm. It is found in the synapse. It localises to the cell membrane. Involved in synapse maturation and required for normal muscle function. The protein is Dystrobrevin alpha (Dtna) of Mus musculus (Mouse).